Here is a 200-residue protein sequence, read N- to C-terminus: Dephospho-CoA kinase (200 aa).

The DPCK domain occupies 3–200 (IIGLTGGIGS…LWQRFATQVE (198 aa)). Residue 11–16 (GSGKST) coordinates ATP.

It belongs to the CoaE family.

Its subcellular location is the cytoplasm. The enzyme catalyses 3'-dephospho-CoA + ATP = ADP + CoA + H(+). Its pathway is cofactor biosynthesis; coenzyme A biosynthesis; CoA from (R)-pantothenate: step 5/5. Catalyzes the phosphorylation of the 3'-hydroxyl group of dephosphocoenzyme A to form coenzyme A. This is Dephospho-CoA kinase from Corynebacterium diphtheriae (strain ATCC 700971 / NCTC 13129 / Biotype gravis).